The primary structure comprises 344 residues: MFDLKATIGRLAQGQTLGRQDAWMLFEQMAFGHASHAQLGALLMALRVRGETVEEIVGAALAMRARMVPVKAPADAVDIVGTGGDNAGTYNISTCAAFIVAGAGVPVAKHGNRALSSKSGAADVLSALGVNLDQTPADIERCIAEAGIGFMFAPTHHPALKQLMPVRVDLATRTIFNLLGPLLNPAGVRHHLIGVYSRAWVEPLAHALGDLGSERALVVHGSDGLDEITTVGPTFVSMLARGRVRSFEITPEMVGLVRANPAELKGADGKWNAVALRRVLEGQPGAYRDIALFNAAGGLIAAGVVENWPDAMALARASVDGGAALATLNRLVEASQPEGHVQPY.

5-phospho-alpha-D-ribose 1-diphosphate is bound by residues G81, 84–85 (GD), T89, 91–94 (NIST), 109–117 (KHGNRALSS), and A121. G81 contributes to the anthranilate binding site. S93 is a binding site for Mg(2+). N112 contacts anthranilate. R167 contacts anthranilate. Mg(2+) contacts are provided by D226 and E227.

This sequence belongs to the anthranilate phosphoribosyltransferase family. Homodimer. Mg(2+) serves as cofactor.

The catalysed reaction is N-(5-phospho-beta-D-ribosyl)anthranilate + diphosphate = 5-phospho-alpha-D-ribose 1-diphosphate + anthranilate. It participates in amino-acid biosynthesis; L-tryptophan biosynthesis; L-tryptophan from chorismate: step 2/5. In terms of biological role, catalyzes the transfer of the phosphoribosyl group of 5-phosphorylribose-1-pyrophosphate (PRPP) to anthranilate to yield N-(5'-phosphoribosyl)-anthranilate (PRA). This chain is Anthranilate phosphoribosyltransferase 2, found in Ralstonia nicotianae (strain ATCC BAA-1114 / GMI1000) (Ralstonia solanacearum).